Here is a 121-residue protein sequence, read N- to C-terminus: Flagellar protein FliT (121 aa).

Positions 1-50 are required for homodimerization; the sequence is MNNAPHLYFAWQQLVEKSQLMLRLATEEQWDELITSEMAYVNAVQEIAHL. Residues 60–98 are fliD binding; it reads MQEQLRPMLRLILDNESKVKQLLQIRMDELAKLVGQSSV.

Belongs to the FliT family. Homodimer. Interacts with FliD and FlhC.

It is found in the cytoplasm. The protein localises to the cytosol. Dual-function protein that regulates the transcription of class 2 flagellar operons and that also acts as an export chaperone for the filament-capping protein FliD. As a transcriptional regulator, acts as an anti-FlhDC factor; it directly binds FlhC, thus inhibiting the binding of the FlhC/FlhD complex to class 2 promoters, resulting in decreased expression of class 2 flagellar operons. As a chaperone, effects FliD transition to the membrane by preventing its premature polymerization, and by directing it to the export apparatus. In Escherichia coli (strain 55989 / EAEC), this protein is Flagellar protein FliT.